A 450-amino-acid polypeptide reads, in one-letter code: Bifunctional protein GlmU (450 aa).

Positions 1 to 229 (MRRHAIILAA…VEEIMGVNDR (229 aa)) are pyrophosphorylase. UDP-N-acetyl-alpha-D-glucosamine is bound by residues 8–11 (LAAG), Lys22, Gln72, and 77–78 (GT). Mg(2+) is bound at residue Asp102. UDP-N-acetyl-alpha-D-glucosamine-binding residues include Gly139, Glu154, and Asn227. Asn227 contributes to the Mg(2+) binding site. The segment at 230-250 (VMLSQAEKAMQRRTNHYHMLN) is linker. Residues 251-450 (GVTIIDPDST…RQTTKEGYRK (200 aa)) form an N-acetyltransferase region. UDP-N-acetyl-alpha-D-glucosamine-binding residues include Arg332 and Lys350. The active-site Proton acceptor is His362. UDP-N-acetyl-alpha-D-glucosamine-binding residues include Tyr365 and Asn376. Residues 385 to 386 (NY), Ala422, and Arg439 contribute to the acetyl-CoA site.

This sequence in the N-terminal section; belongs to the N-acetylglucosamine-1-phosphate uridyltransferase family. The protein in the C-terminal section; belongs to the transferase hexapeptide repeat family. In terms of assembly, homotrimer. Mg(2+) is required as a cofactor.

The protein localises to the cytoplasm. The catalysed reaction is alpha-D-glucosamine 1-phosphate + acetyl-CoA = N-acetyl-alpha-D-glucosamine 1-phosphate + CoA + H(+). It catalyses the reaction N-acetyl-alpha-D-glucosamine 1-phosphate + UTP + H(+) = UDP-N-acetyl-alpha-D-glucosamine + diphosphate. It participates in nucleotide-sugar biosynthesis; UDP-N-acetyl-alpha-D-glucosamine biosynthesis; N-acetyl-alpha-D-glucosamine 1-phosphate from alpha-D-glucosamine 6-phosphate (route II): step 2/2. The protein operates within nucleotide-sugar biosynthesis; UDP-N-acetyl-alpha-D-glucosamine biosynthesis; UDP-N-acetyl-alpha-D-glucosamine from N-acetyl-alpha-D-glucosamine 1-phosphate: step 1/1. Its pathway is bacterial outer membrane biogenesis; LPS lipid A biosynthesis. Its function is as follows. Catalyzes the last two sequential reactions in the de novo biosynthetic pathway for UDP-N-acetylglucosamine (UDP-GlcNAc). The C-terminal domain catalyzes the transfer of acetyl group from acetyl coenzyme A to glucosamine-1-phosphate (GlcN-1-P) to produce N-acetylglucosamine-1-phosphate (GlcNAc-1-P), which is converted into UDP-GlcNAc by the transfer of uridine 5-monophosphate (from uridine 5-triphosphate), a reaction catalyzed by the N-terminal domain. This chain is Bifunctional protein GlmU, found in Staphylococcus aureus (strain USA300).